A 327-amino-acid chain; its full sequence is Pectate lyase A (327 aa).

The first 19 residues, 1–19, serve as a signal peptide directing secretion; the sequence is MQNLKFLIAAVSCLGPALA. An N-linked (GlcNAc...) asparagine glycan is attached at Asn99. Positions 140, 169, and 173 each coordinate Ca(2+). Residue Arg226 is part of the active site.

This sequence belongs to the polysaccharide lyase 1 family. Ca(2+) is required as a cofactor.

It is found in the secreted. It catalyses the reaction Eliminative cleavage of (1-&gt;4)-alpha-D-galacturonan to give oligosaccharides with 4-deoxy-alpha-D-galact-4-enuronosyl groups at their non-reducing ends.. In terms of biological role, pectinolytic enzyme consist of four classes of enzymes: pectin lyase, polygalacturonase, pectin methylesterase and rhamnogalacturonase. Among pectinolytic enzymes, pectin lyase is the most important in depolymerization of pectin, since it cleaves internal glycosidic bonds of highly methylated pectins. Favors pectate, the anion, over pectin, the methyl ester. This Emericella nidulans (strain FGSC A4 / ATCC 38163 / CBS 112.46 / NRRL 194 / M139) (Aspergillus nidulans) protein is Pectate lyase A (plyA).